The sequence spans 191 residues: Small ribosomal subunit protein eS7z (191 aa).

Met1 carries the N-acetylmethionine modification. Residues Glu15 to Val50 are a coiled coil.

It belongs to the eukaryotic ribosomal protein eS7 family.

The polypeptide is Small ribosomal subunit protein eS7z (RPS7A) (Arabidopsis thaliana (Mouse-ear cress)).